Reading from the N-terminus, the 446-residue chain is Branched-chain amino acid permease BrnQ (446 aa).

Helical transmembrane passes span isoleucine 13–leucine 33, leucine 41–alanine 61, lysine 81–proline 101, methionine 120–phenylalanine 140, phenylalanine 154–proline 174, valine 196–isoleucine 216, threonine 237–alanine 257, glycine 285–isoleucine 305, tryptophan 325–isoleucine 345, phenylalanine 347–leucine 367, isoleucine 381–glycine 401, and glycine 421–isoleucine 441.

It belongs to the branched chain amino acid transporter family.

Its subcellular location is the cell membrane. With respect to regulation, leucine uptake is inhibited by the proton ionophore carbonyl cyanide m-chlorophenylhydrazone (CCCP). Functionally, branched chain amino acid transport system which is involved in the uptake of leucine, valine and isoleucine. The proton motive force is probably the driving force for transport. The sequence is that of Branched-chain amino acid permease BrnQ from Lactobacillus delbrueckii subsp. lactis.